The following is a 396-amino-acid chain: S-adenosylmethionine synthase (396 aa).

An ATP-binding site is contributed by H15. D17 serves as a coordination point for Mg(2+). E43 contributes to the K(+) binding site. 2 residues coordinate L-methionine: E56 and Q99. The interval 99 to 109 (QSGDIAQGVDT) is flexible loop. ATP-binding positions include 173–175 (DGK), 241–242 (RF), D250, 256–257 (RK), A273, and K277. L-methionine is bound at residue D250. Residue K281 coordinates L-methionine.

It belongs to the AdoMet synthase family. In terms of assembly, homotetramer; dimer of dimers. Mg(2+) is required as a cofactor. Requires K(+) as cofactor.

It is found in the cytoplasm. It catalyses the reaction L-methionine + ATP + H2O = S-adenosyl-L-methionine + phosphate + diphosphate. The protein operates within amino-acid biosynthesis; S-adenosyl-L-methionine biosynthesis; S-adenosyl-L-methionine from L-methionine: step 1/1. Its function is as follows. Catalyzes the formation of S-adenosylmethionine (AdoMet) from methionine and ATP. The overall synthetic reaction is composed of two sequential steps, AdoMet formation and the subsequent tripolyphosphate hydrolysis which occurs prior to release of AdoMet from the enzyme. In Nocardioides sp. (strain ATCC BAA-499 / JS614), this protein is S-adenosylmethionine synthase.